Reading from the N-terminus, the 373-residue chain is Coiled-coil domain-containing protein 34 (373 aa).

Disordered stretches follow at residues 1–112 and 118–137; these read MWAA…SLRG and CAST…QVRL. Serine 52 bears the Phosphoserine mark. A compositionally biased stretch (polar residues) spans 61–76; that stretch reads NSTRSLLSPLGHQSFQ. The segment covering 77–101 has biased composition (acidic residues); the sequence is FDEDDGDGEDEEDVDDEEDVDEDAH. The stretch at 152-286 forms a coiled coil; it reads KEKEERDRLQ…QEWLENAKHK (135 aa). A disordered region spans residues 324–352; it reads IHMPPPKEAKDLSGRKSKRPVISQPHKSS. A compositionally biased stretch (basic and acidic residues) spans 328 to 337; that stretch reads PPKEAKDLSG.

Expressed in sperm.

It localises to the cell projection. It is found in the cilium. The protein resides in the flagellum. Functionally, involved in spermatogenesis. Has a probable role in anterograde intraflagellar transport which is essential for the formation of sperm flagella. This chain is Coiled-coil domain-containing protein 34 (CCDC34), found in Homo sapiens (Human).